The primary structure comprises 308 residues: Methionyl-tRNA formyltransferase (308 aa).

Serine 110–proline 113 contributes to the (6S)-5,6,7,8-tetrahydrofolate binding site.

This sequence belongs to the Fmt family.

The enzyme catalyses L-methionyl-tRNA(fMet) + (6R)-10-formyltetrahydrofolate = N-formyl-L-methionyl-tRNA(fMet) + (6S)-5,6,7,8-tetrahydrofolate + H(+). Its function is as follows. Attaches a formyl group to the free amino group of methionyl-tRNA(fMet). The formyl group appears to play a dual role in the initiator identity of N-formylmethionyl-tRNA by promoting its recognition by IF2 and preventing the misappropriation of this tRNA by the elongation apparatus. The protein is Methionyl-tRNA formyltransferase of Neisseria meningitidis serogroup A / serotype 4A (strain DSM 15465 / Z2491).